The following is an 82-amino-acid chain: Penaeidin-3g (82 aa).

The N-terminal stretch at 1 to 19 (MRLVVCLVFLASFALVCQG) is a signal peptide. Pyrrolidone carboxylic acid is present on Q20. 3 cysteine pairs are disulfide-bonded: C51–C66, C55–C73, and C67–C74. The residue at position 81 (S81) is a Serine amide.

It belongs to the penaeidin family.

It is found in the cytoplasmic granule. Antibacterial and antifungal activity. Presents chitin-binding activity. The sequence is that of Penaeidin-3g from Penaeus vannamei (Whiteleg shrimp).